A 481-amino-acid chain; its full sequence is Matrilin-3 (481 aa).

The signal sequence occupies residues 1-27 (MLLSAPLRHLPGLLLLLWPLLLLPSLA). Residues 78 to 253 (DLVFIIDSSR…GVIEKLSARF (176 aa)) form the VWFA domain. Arg193 bears the Omega-N-methylarginine mark. EGF-like domains lie at 259-300 (ALDQ…KTCS), 301-342 (AIDK…RTCA), 343-384 (ALDK…KTCS), and 385-426 (VRNK…KTCS). 12 disulfide bridges follow: Cys263/Cys274, Cys270/Cys284, Cys286/Cys299, Cys305/Cys316, Cys312/Cys326, Cys328/Cys341, Cys347/Cys358, Cys354/Cys368, Cys370/Cys383, Cys389/Cys400, Cys396/Cys410, and Cys412/Cys425. The N-linked (GlcNAc...) asparagine glycan is linked to Asn321. At Ser436 the chain carries Phosphoserine; by FAM20C. The stretch at 451–475 (EKVSSHLQKLNTKLDNILKKLKVTE) forms a coiled coil.

Can form homooligomers (monomers, dimers, trimers and tetramers) and heterooligomers with matrilin-1. Interacts with COMP. Component of a complex containing at least CRELD2, MANF, MATN3 and PDIA4. In terms of tissue distribution, strongly expressed in growing skeletal tissue such as epiphyseal growth plate or in bone undergoing growth and remodeling. In the bone, actively synthesized in osteoblasts and osteocytes. Expressed in cartilage of sternum, femur, vertebrae, trachea, articular and epiphyseal cartilage, cartilage of developing bones and bones.

The protein localises to the secreted. In terms of biological role, major component of the extracellular matrix of cartilage and may play a role in the formation of extracellular filamentous networks. This Mus musculus (Mouse) protein is Matrilin-3 (Matn3).